Consider the following 163-residue polypeptide: MKLNEIADNEGSRKKRTRVGRGIGSGKGKQSGRGGKGQTARSGVRIKGFEGGQMPLHRRLPKRGFNNIFRVELSEVNLDRLQDAIDAKKLDASATINAEALVKSGVLRRAKGGVRLLGRGELKSKVAIEVHGATKSAIEAVEKAGGSVKILAPKKDEGEAKAS.

The segment at 1-43 (MKLNEIADNEGSRKKRTRVGRGIGSGKGKQSGRGGKGQTARSG) is disordered. The segment covering 21–37 (RGIGSGKGKQSGRGGKG) has biased composition (gly residues).

Belongs to the universal ribosomal protein uL15 family. Part of the 50S ribosomal subunit.

Functionally, binds to the 23S rRNA. The protein is Large ribosomal subunit protein uL15 of Afipia carboxidovorans (strain ATCC 49405 / DSM 1227 / KCTC 32145 / OM5) (Oligotropha carboxidovorans).